The sequence spans 366 residues: Putative F-box protein At1g26515 (366 aa).

Residues 1–20 (MKTRSKKTKTENNQEKSKEK) are disordered. A compositionally biased stretch (basic and acidic residues) spans 8 to 20 (TKTENNQEKSKEK). The F-box domain occupies 20–66 (KNKFDQLPLDLEIEIFRRLPLKSVARFLTLSKSCAATIRSPSFITSF).

The chain is Putative F-box protein At1g26515 from Arabidopsis thaliana (Mouse-ear cress).